The chain runs to 75 residues: Gas vesicle protein S (75 aa).

This sequence belongs to the gas vesicle GvpA family.

The protein localises to the gas vesicle. Probably a minor component of the gas vesicle. Gas vesicles are hollow, gas filled proteinaceous nanostructures found in some microorganisms. It is not clear what function gas vesicles perform in soil bacteria. The polypeptide is Gas vesicle protein S (Streptomyces sp. (strain CB03234)).